A 179-amino-acid chain; its full sequence is ATP synthase subunit delta (179 aa).

It belongs to the ATPase delta chain family. In terms of assembly, F-type ATPases have 2 components, F(1) - the catalytic core - and F(0) - the membrane proton channel. F(1) has five subunits: alpha(3), beta(3), gamma(1), delta(1), epsilon(1). F(0) has three main subunits: a(1), b(2) and c(10-14). The alpha and beta chains form an alternating ring which encloses part of the gamma chain. F(1) is attached to F(0) by a central stalk formed by the gamma and epsilon chains, while a peripheral stalk is formed by the delta and b chains.

Its subcellular location is the cell membrane. In terms of biological role, f(1)F(0) ATP synthase produces ATP from ADP in the presence of a proton or sodium gradient. F-type ATPases consist of two structural domains, F(1) containing the extramembraneous catalytic core and F(0) containing the membrane proton channel, linked together by a central stalk and a peripheral stalk. During catalysis, ATP synthesis in the catalytic domain of F(1) is coupled via a rotary mechanism of the central stalk subunits to proton translocation. Its function is as follows. This protein is part of the stalk that links CF(0) to CF(1). It either transmits conformational changes from CF(0) to CF(1) or is implicated in proton conduction. The chain is ATP synthase subunit delta from Staphylococcus carnosus (strain TM300).